The chain runs to 186 residues: UPF0301 protein CV_3909 (186 aa).

The protein belongs to the UPF0301 (AlgH) family.

The sequence is that of UPF0301 protein CV_3909 from Chromobacterium violaceum (strain ATCC 12472 / DSM 30191 / JCM 1249 / CCUG 213 / NBRC 12614 / NCIMB 9131 / NCTC 9757 / MK).